We begin with the raw amino-acid sequence, 464 residues long: Soluble pyridine nucleotide transhydrogenase (464 aa).

FAD is bound at residue 35–44 (DSRRQVGGNC).

This sequence belongs to the class-I pyridine nucleotide-disulfide oxidoreductase family. Requires FAD as cofactor.

The protein localises to the cytoplasm. The catalysed reaction is NAD(+) + NADPH = NADH + NADP(+). Its function is as follows. Conversion of NADPH, generated by peripheral catabolic pathways, to NADH, which can enter the respiratory chain for energy generation. The protein is Soluble pyridine nucleotide transhydrogenase of Pseudomonas putida (strain W619).